A 292-amino-acid chain; its full sequence is tRNA pseudouridine synthase B (292 aa).

Residue aspartate 38 is the Nucleophile of the active site.

Belongs to the pseudouridine synthase TruB family. Type 1 subfamily.

The catalysed reaction is uridine(55) in tRNA = pseudouridine(55) in tRNA. Responsible for synthesis of pseudouridine from uracil-55 in the psi GC loop of transfer RNAs. In Streptococcus pneumoniae serotype 4 (strain ATCC BAA-334 / TIGR4), this protein is tRNA pseudouridine synthase B.